Consider the following 340-residue polypeptide: Phosphate acyltransferase (340 aa).

The protein belongs to the PlsX family. Homodimer. Probably interacts with PlsY.

The protein resides in the cytoplasm. The enzyme catalyses a fatty acyl-[ACP] + phosphate = an acyl phosphate + holo-[ACP]. It participates in lipid metabolism; phospholipid metabolism. Functionally, catalyzes the reversible formation of acyl-phosphate (acyl-PO(4)) from acyl-[acyl-carrier-protein] (acyl-ACP). This enzyme utilizes acyl-ACP as fatty acyl donor, but not acyl-CoA. This is Phosphate acyltransferase from Pseudomonas syringae pv. syringae (strain B728a).